The primary structure comprises 440 residues: Chromosomal replication initiator protein DnaA (440 aa).

The segment at 1–72 is domain I, interacts with DnaA modulators; it reads MTELDSLWEA…KEFAQRELGR (72 aa). The domain II stretch occupies residues 72–103; that stretch reads RNIEPHYVLEGEFTYTNKKTEDDPTPSFEMDT. Residues 104 to 320 form a domain III, AAA+ region region; that stretch reads PLNPHYNFGT…GALTKVQAFA (217 aa). Residues glycine 148, glycine 150, lysine 151, and threonine 152 each contribute to the ATP site. Residues 321 to 440 are domain IV, binds dsDNA; sequence NLSGERITPS…ITKLKAKLRS (120 aa).

This sequence belongs to the DnaA family. Oligomerizes as a right-handed, spiral filament on DNA at oriC.

The protein localises to the cytoplasm. In terms of biological role, plays an essential role in the initiation and regulation of chromosomal replication. ATP-DnaA binds to the origin of replication (oriC) to initiate formation of the DNA replication initiation complex once per cell cycle. Binds the DnaA box (a 9 base pair repeat at the origin) and separates the double-stranded (ds)DNA. Forms a right-handed helical filament on oriC DNA; dsDNA binds to the exterior of the filament while single-stranded (ss)DNA is stabiized in the filament's interior. The ATP-DnaA-oriC complex binds and stabilizes one strand of the AT-rich DNA unwinding element (DUE), permitting loading of DNA polymerase. After initiation quickly degrades to an ADP-DnaA complex that is not apt for DNA replication. Binds acidic phospholipids. This Limosilactobacillus reuteri (strain DSM 20016) (Lactobacillus reuteri) protein is Chromosomal replication initiator protein DnaA.